The primary structure comprises 312 residues: tRNA uridine(34) hydroxylase (312 aa).

The Rhodanese domain occupies 124–218 (SDPEVLLIDT…YLEEVPEQES (95 aa)). Cys178 (cysteine persulfide intermediate) is an active-site residue. The disordered stretch occupies residues 293-312 (AKARNQPHPIGRNYRLPSEA).

Belongs to the TrhO family.

The enzyme catalyses uridine(34) in tRNA + AH2 + O2 = 5-hydroxyuridine(34) in tRNA + A + H2O. Catalyzes oxygen-dependent 5-hydroxyuridine (ho5U) modification at position 34 in tRNAs. This Pseudomonas syringae pv. syringae (strain B728a) protein is tRNA uridine(34) hydroxylase.